The sequence spans 474 residues: uncharacterized protein (474 aa).

This is an uncharacterized protein from Magallana gigas (Pacific oyster).